A 188-amino-acid polypeptide reads, in one-letter code: Protein SSX4 (188 aa).

Residues 20–83 (KLRKAFDDIA…KRAADFHGND (64 aa)) form the KRAB-related domain. The span at 116 to 127 (PAEEENGLKEVP) shows a compositional bias: basic and acidic residues. The segment at 116 to 167 (PAEEENGLKEVPEASGPQNDGKQLCPPGNPSTLEKINKTSGPKRGKHAWTHR) is disordered. Over residues 145–155 (PSTLEKINKTS) the composition is skewed to polar residues. A compositionally biased stretch (basic residues) spans 156 to 167 (GPKRGKHAWTHR).

This sequence belongs to the SSX family.

Its function is as follows. Could act as a modulator of transcription. The protein is Protein SSX4 (SSX4) of Homo sapiens (Human).